A 231-amino-acid polypeptide reads, in one-letter code: Aquaporin Z (231 aa).

A run of 2 helical transmembrane segments spans residues 9 to 29 and 34 to 54; these read LLGT…AAAF and IGFV…IYAV. Positions 63-65 match the NPA 1 motif; it reads NPA. The next 3 membrane-spanning stretches (helical) occupy residues 82-102, 133-153, and 160-180; these read IPYI…LYVI, SAIV…IGAT, and GFAP…SIPI. Positions 186-188 match the NPA 2 motif; sequence NPA. A helical membrane pass occupies residues 202–222; sequence LEQLWFFWVMPIIGGIVGGGI.

The protein belongs to the MIP/aquaporin (TC 1.A.8) family. Homotetramer.

It localises to the cell inner membrane. The catalysed reaction is H2O(in) = H2O(out). In terms of biological role, channel that permits osmotically driven movement of water in both directions. It is involved in the osmoregulation and in the maintenance of cell turgor during volume expansion in rapidly growing cells. It mediates rapid entry or exit of water in response to abrupt changes in osmolarity. The polypeptide is Aquaporin Z (Photorhabdus laumondii subsp. laumondii (strain DSM 15139 / CIP 105565 / TT01) (Photorhabdus luminescens subsp. laumondii)).